We begin with the raw amino-acid sequence, 287 residues long: Cyclopropane mycolic acid synthase MmaA2 (287 aa).

Residues 33–34 (YS), 72–74 (GCG), 94–99 (TLSKNQ), 123–124 (WE), and Ile136 each bind S-adenosyl-L-methionine. The active site involves Cys269.

This sequence belongs to the CFA/CMAS family.

It carries out the reaction a 1-acyl-2-(9Z)-enoyl-sn-glycero-3-phospholipid + S-adenosyl-L-methionine = a 1-acyl-2-(9-cyclopronane)-acyl-sn-glycero-3-phospholipid + S-adenosyl-L-homocysteine + H(+). It functions in the pathway lipid metabolism; mycolic acid biosynthesis. Catalyzes the conversion of a double bond to a cis cyclopropane ring at the distal position of an alpha mycolic acid via the transfer of a methylene group from S-adenosyl-L-methionine. MmaA2 also catalyzes the biosynthesis of the cis-cyclopropanated methoxymycolates. Cyclopropanated mycolic acids are key factors participating in cell envelope permeability, host immunomodulation and persistence. The sequence is that of Cyclopropane mycolic acid synthase MmaA2 (mmaA2) from Mycobacterium tuberculosis (strain ATCC 25177 / H37Ra).